The sequence spans 413 residues: Aminopeptidase 2 (413 aa).

Residues Glu-250, Glu-316, Glu-340, His-345, His-378, and Asp-380 each contribute to the a divalent metal cation site.

The protein belongs to the peptidase M29 family. Homodimer. Co(2+) is required as a cofactor. The cofactor is Zn(2+). Mg(2+) serves as cofactor.

Functionally, broad specificity metal-dependent exopeptidase, releasing all N-terminal amino acids. The polypeptide is Aminopeptidase 2 (Geobacillus stearothermophilus (Bacillus stearothermophilus)).